Consider the following 236-residue polypeptide: MEQMHSLESSLPPEQPPTKQAIESLNLELSQEFKLAANAVTRLYRVANEKNSLTKHQGYLTCLDDILCALDSNVTADELRAWCYKRRNDILSNSQDKSLNPVKERERKLNKFSENQHRENEAHKEPFEKDSAVKYNFSFNESNGDLSNINENIAPKFRLSMPPLSVEHPPRNASRIKSWKARTINHGRGDTRNLNDITGLGHERERDRENTHYEKKPKLDSDSEVDIRSFRQDMDL.

Residues 186–236 are disordered; the sequence is HGRGDTRNLNDITGLGHERERDRENTHYEKKPKLDSDSEVDIRSFRQDMDL. A compositionally biased stretch (basic and acidic residues) spans 201-236; that stretch reads GHERERDRENTHYEKKPKLDSDSEVDIRSFRQDMDL. The residue at position 221 (Ser221) is a Phosphoserine.

This is an uncharacterized protein from Saccharomyces cerevisiae (strain ATCC 204508 / S288c) (Baker's yeast).